We begin with the raw amino-acid sequence, 393 residues long: Nucleosome assembly protein 1-like 1-B (393 aa).

Positions 1–10 (MANIDNKEQT) are enriched in basic and acidic residues. Residues 1–38 (MANIDNKEQTELDQQDMEDVEDVEEEETGEEANSKARQ) are disordered. Over residues 11 to 30 (ELDQQDMEDVEDVEEEETGE) the composition is skewed to acidic residues. The short motif at 126–151 (YEPTEEECEWKVDEEEDIAEDLKEKA) is the NAP1L motif element. Residues 274 to 280 (IKKKQKH) carry the Nuclear localization signal motif. Acidic residues predominate over residues 347 to 377 (AIEDDDDDYDEEGEEADDEEGEEEADEDHDP). The interval 347 to 393 (AIEDDDDDYDEEGEEADDEEGEEEADEDHDPDFDPKKAQNPAECKQQ) is disordered.

The protein belongs to the nucleosome assembly protein (NAP) family. Forms homomultimers. Interacts with histone b4. Interacts with the B-type cyclins ccnb1 and ccnb2. Phosphorylated by cyclin B-cdc2 kinase complexes.

The protein localises to the cytoplasm. It localises to the nucleus. In terms of biological role, acts as a chaperone for the linker histone to facilitate deposition of histone B4 onto linker DNA. Required for both remodeling of sperm chromatin into nucleosomes, and linker histone binding to nucleosome core dimers. Plays a role in tissue-specific gene regulation. Required for primitive hemopoiesis, acting upstream of tal1/scl. This Xenopus laevis (African clawed frog) protein is Nucleosome assembly protein 1-like 1-B (nap1l1-b).